A 457-amino-acid polypeptide reads, in one-letter code: Cyanidin 3-O-galactoside 2''-O-xylosyltransferase FGGT1 (457 aa).

It belongs to the UDP-glycosyltransferase family. In terms of tissue distribution, expressed in ovaries.

The enzyme catalyses cyanidin 3-O-beta-D-galactoside + UDP-alpha-D-xylose = cyanidin 3-O-[beta-D-xylosyl-(1-&gt;2)-beta-D-galactoside] + UDP + H(+). It participates in pigment biosynthesis; anthocyanin biosynthesis. In terms of biological role, xylosyltransferase involved in anthocyanin biosynthesis by catalyzing the xylosylation of cyanidin 3-O-galactoside to form cyanidin 3-O-[2-O-(-xylosyl)-galactoside]. Required for the accumulation of anthocyanin in red-fleshed kiwifruit varieties. The chain is Cyanidin 3-O-galactoside 2''-O-xylosyltransferase FGGT1 from Actinidia chinensis var. chinensis (Chinese soft-hair kiwi).